We begin with the raw amino-acid sequence, 276 residues long: Putative ABC transporter ATP-binding protein MA_4021 (276 aa).

Residues Phe5–Leu247 enclose the ABC transporter domain. Gly38–Ser45 is an ATP binding site.

This sequence belongs to the ABC transporter superfamily.

It localises to the cell membrane. In terms of biological role, probably part of an ABC transporter complex. Responsible for energy coupling to the transport system. This is Putative ABC transporter ATP-binding protein MA_4021 from Methanosarcina acetivorans (strain ATCC 35395 / DSM 2834 / JCM 12185 / C2A).